A 78-amino-acid polypeptide reads, in one-letter code: Acyl carrier protein (78 aa).

The Carrier domain maps to 1-76 (MALFEDIQAV…DVVKYIEDNK (76 aa)). O-(pantetheine 4'-phosphoryl)serine is present on Ser36.

The protein belongs to the acyl carrier protein (ACP) family. Post-translationally, 4'-phosphopantetheine is transferred from CoA to a specific serine of apo-ACP by AcpS. This modification is essential for activity because fatty acids are bound in thioester linkage to the sulfhydryl of the prosthetic group.

Its subcellular location is the cytoplasm. The protein operates within lipid metabolism; fatty acid biosynthesis. In terms of biological role, carrier of the growing fatty acid chain in fatty acid biosynthesis. This Helicobacter pylori (strain Shi470) protein is Acyl carrier protein.